The primary structure comprises 130 residues: Small ribosomal subunit protein eS8 (130 aa).

It belongs to the eukaryotic ribosomal protein eS8 family. As to quaternary structure, part of the 30S ribosomal subunit.

The polypeptide is Small ribosomal subunit protein eS8 (Ignicoccus hospitalis (strain KIN4/I / DSM 18386 / JCM 14125)).